The following is a 423-amino-acid chain: Probable serine/threonine-protein kinase PBL5 (423 aa).

The interval 1 to 66 (MGCFGCSKKS…DVNNEGGVGK (66 aa)) is disordered. Gly2 is lipidated: N-myristoyl glycine. Cys3 is lipidated: S-palmitoyl cysteine. A compositionally biased stretch (basic and acidic residues) spans 12-22 (KRSETNKDTVI). Residues 43 to 52 (TQPSSDSTKV) are compositionally biased toward polar residues. Thr92 is modified (phosphothreonine). Residues 103–380 (FRSDCFLGEG…SDVVLALNFL (278 aa)) form the Protein kinase domain. ATP is bound by residues 109–117 (LGEGGFGKV) and Lys132. Tyr177 carries the phosphotyrosine modification. The Proton acceptor role is filled by Asp230. Phosphoserine occurs at positions 234 and 264. 2 positions are modified to phosphothreonine: Thr265 and Thr270. Tyr278 carries the phosphotyrosine modification. Positions 383–398 (SKYDPNSPSSSSGKNP) are enriched in low complexity. Residues 383–423 (SKYDPNSPSSSSGKNPSFHRDRDDEEKRPHLVKETECEGSS) are disordered. Residues 400–423 (FHRDRDDEEKRPHLVKETECEGSS) show a composition bias toward basic and acidic residues.

Belongs to the protein kinase superfamily. Ser/Thr protein kinase family. Palmitoylation at Cys-3 and Cys-6 are required for plasma membrane location.

The protein localises to the cell membrane. The enzyme catalyses L-seryl-[protein] + ATP = O-phospho-L-seryl-[protein] + ADP + H(+). It carries out the reaction L-threonyl-[protein] + ATP = O-phospho-L-threonyl-[protein] + ADP + H(+). Its function is as follows. May be involved in plant defense signaling. The chain is Probable serine/threonine-protein kinase PBL5 from Arabidopsis thaliana (Mouse-ear cress).